The sequence spans 397 residues: MTTKDKGDQKELQKYLSEWQKRHQEYLEKKSQEKASETDEEERNAEPLETSESAGTKETDNSEDEKEDQTQDQASDDDETNESEESEDVEEPEEENIEESSDVSEDRTEKFIGQADVGIEKEAKRDKPRIERIHLYRALPVLVISSLLILLSLYFITPLGSLKNLVVTGNERVTQDEIIKATQIDSRDYTLTTFLNRNQYANNLKKANSWIEKAEISYQFPITFKIQVTEYKILAYEASTGNIYPVISNGTVINQPVKKEALPENYMRLNLSDKAKVKKLVQELSDVPDSIKNEIQTVDLTPSKATKDLLTLTMRDEHKIIVPLSDIHKKLPYYSRVHPLLTEPSIVDMEAGIFSYSASLVQKEEQDQEQEKEESSEETVPGETEAAPSDVTDETNN.

The Cytoplasmic portion of the chain corresponds to 1-138 (MTTKDKGDQK…RIERIHLYRA (138 aa)). Positions 24–37 (QEYLEKKSQEKASE) are enriched in basic and acidic residues. The segment at 24 to 115 (QEYLEKKSQE…DRTEKFIGQA (92 aa)) is disordered. A compositionally biased stretch (acidic residues) spans 74–103 (ASDDDETNESEESEDVEEPEEENIEESSDV). A helical membrane pass occupies residues 139 to 159 (LPVLVISSLLILLSLYFITPL). A POTRA domain is found at 160-231 (GSLKNLVVTG…ITFKIQVTEY (72 aa)). The Extracellular portion of the chain corresponds to 160 to 397 (GSLKNLVVTG…PSDVTDETNN (238 aa)). The interval 360 to 397 (LVQKEEQDQEQEKEESSEETVPGETEAAPSDVTDETNN) is disordered. Positions 366–377 (QDQEQEKEESSE) are enriched in acidic residues.

It belongs to the FtsQ/DivIB family. DivIB subfamily.

The protein resides in the cell membrane. Functionally, cell division protein that may be involved in stabilizing or promoting the assembly of the division complex. This is Cell division protein DivIB from Streptococcus gordonii (strain Challis / ATCC 35105 / BCRC 15272 / CH1 / DL1 / V288).